We begin with the raw amino-acid sequence, 352 residues long: C-C chemokine receptor type 5 (352 aa).

Residues 1–30 (MDYQVSSPTYDIDYYTSEPCQKINVKQIAG) lie on the Extracellular side of the membrane. Tyrosine 3 is subject to Sulfotyrosine. Residues serine 6 and serine 7 are each glycosylated (O-linked (GalNAc...) serine). Sulfotyrosine is present on residues tyrosine 10, tyrosine 14, and tyrosine 15. Cystine bridges form between cysteine 20/cysteine 269 and cysteine 101/cysteine 178. Residues 31–58 (RLLPPLYSLVFIFGFVGNILVVLILINC) form a helical membrane-spanning segment. The Cytoplasmic segment spans residues 59–68 (KRLKSMTDIY). Residues 69 to 89 (LLNLAISDLLFLLTVPFWAHY) form a helical membrane-spanning segment. At 90–102 (AAAQWDFGNTMCQ) the chain is on the extracellular side. A helical membrane pass occupies residues 103-124 (LLTGLYFIGFFSGIFFIILLTI). Residues 125–141 (DRYLAIVHAVFALKART) are Cytoplasmic-facing. A helical membrane pass occupies residues 142–166 (VTFGVVTSVITWVVAVFASLPGIIF). The Extracellular segment spans residues 167–198 (TRSQREGLHYTCSSHFPYSQYQFWKNFQTLKI). Residues 199–218 (VILGLVLPLLVMVICYSGIL) traverse the membrane as a helical segment. Residues 219 to 235 (KTLLRCRNEKKRHRAVR) lie on the Cytoplasmic side of the membrane. The helical transmembrane segment at 236–260 (LIFTIMIVYFLFWAPYNIVLLLNTF) threads the bilayer. Residues 261–277 (QEFFGLNNCSSSNRLDQ) lie on the Extracellular side of the membrane. A helical membrane pass occupies residues 278–301 (AMQVTETLGMTHCCINPIIYAFVG). Residues 302 to 352 (EKFRNYLLVFFQKHIAKRFCKCCSIFQQEAPERASSVYTRSTGEQEISVGL) lie on the Cytoplasmic side of the membrane. S-palmitoyl cysteine attachment occurs at residues cysteine 321, cysteine 323, and cysteine 324. Serine 336, serine 337, serine 342, and serine 349 each carry phosphoserine; by BARK1.

The protein belongs to the G-protein coupled receptor 1 family. As to quaternary structure, interacts with PRAF2. Efficient ligand binding to CCL3/MIP-1alpha and CCL4/MIP-1beta requires sulfation, O-glycosylation and sialic acid modifications. Glycosylation on Ser-6 is required for efficient binding of CCL4. Interacts with GRK2. Interacts with ARRB1 and ARRB2. Interacts with CNIH4. Interacts with S100A4; this interaction stimulates T-lymphocyte chemotaxis. Post-translationally, sulfated on at least 2 of the N-terminal tyrosines. Sulfation is required for efficient binding of the chemokines, CCL3 and CCL4. In terms of processing, palmitoylation in the C-terminal is important for cell surface expression. Phosphorylation on serine residues in the C-terminal is stimulated by binding CC chemokines especially by APO-RANTES. Post-translationally, O-glycosylated, but not N-glycosylated. Ser-6 appears to be the major site even if Ser-7 may be also O-glycosylated. Also sialylated glycans present which contribute to chemokine binding. Thr-16 and Ser-17 may also be glycosylated and, if so, with small moieties such as a T-antigen.

It localises to the cell membrane. Functionally, receptor for a number of inflammatory CC-chemokines including CCL3/MIP-1-alpha, CCL4/MIP-1-beta and RANTES and subsequently transduces a signal by increasing the intracellular calcium ion level. May play a role in the control of granulocytic lineage proliferation or differentiation. Participates in T-lymphocyte migration to the infection site by acting as a chemotactic receptor. This chain is C-C chemokine receptor type 5 (CCR5), found in Theropithecus gelada (Gelada baboon).